Here is a 591-residue protein sequence, read N- to C-terminus: L-fucose isomerase (591 aa).

Catalysis depends on proton acceptor residues Glu-337 and Asp-361. The Mn(2+) site is built by Glu-337, Asp-361, and His-528.

The protein belongs to the L-fucose isomerase family. As to quaternary structure, homohexamer. Mn(2+) is required as a cofactor.

The protein resides in the cytoplasm. It carries out the reaction L-fucose = L-fuculose. Its pathway is carbohydrate degradation; L-fucose degradation; L-lactaldehyde and glycerone phosphate from L-fucose: step 1/3. Functionally, converts the aldose L-fucose into the corresponding ketose L-fuculose. The chain is L-fucose isomerase from Citrobacter koseri (strain ATCC BAA-895 / CDC 4225-83 / SGSC4696).